A 238-amino-acid polypeptide reads, in one-letter code: Glyceraldehyde 3-phosphate phosphatase (238 aa).

Belongs to the HAD-like hydrolase superfamily. Mg(2+) serves as cofactor.

Catalyzes the dephosphorylation of D,L-glyceraldehyde 3-phosphate in vitro. This Pyrococcus abyssi (strain GE5 / Orsay) protein is Glyceraldehyde 3-phosphate phosphatase.